Here is a 249-residue protein sequence, read N- to C-terminus: Putative [LysW]-aminoadipate/[LysW]-glutamate kinase (249 aa).

Positions 63 and 166 each coordinate substrate.

This sequence belongs to the acetylglutamate kinase family. LysZ subfamily.

It localises to the cytoplasm. The catalysed reaction is [amino-group carrier protein]-C-terminal-N-(1,4-dicarboxybutan-1-yl)-L-glutamine + ATP = [amino-group carrier protein]-C-terminal-N-(1-carboxy-5-phosphooxy-5-oxopentan-1-yl)-L-glutamine + ADP. It carries out the reaction [amino-group carrier protein]-C-terminal-gamma-(L-glutamyl)-L-glutamate + ATP = [amino-group carrier protein]-C-terminal-gamma-(5-phospho-L-glutamyl)-L-glutamate + ADP. It functions in the pathway amino-acid biosynthesis; L-lysine biosynthesis via AAA pathway; L-lysine from L-alpha-aminoadipate (Thermus route): step 2/5. It participates in amino-acid biosynthesis; L-arginine biosynthesis. Involved in both the arginine and lysine biosynthetic pathways. Phosphorylates the LysW-bound precursors glutamate (for arginine biosynthesis), respectively alpha-aminoadipate (for lysine biosynthesis). In Pyrococcus furiosus (strain ATCC 43587 / DSM 3638 / JCM 8422 / Vc1), this protein is Putative [LysW]-aminoadipate/[LysW]-glutamate kinase.